Reading from the N-terminus, the 810-residue chain is DNA ligase (810 aa).

NAD(+) is bound by residues Asp-46–Asp-50, Ser-95–Leu-96, and Glu-129. Lys-131 (N6-AMP-lysine intermediate) is an active-site residue. 4 residues coordinate NAD(+): Arg-152, Glu-189, Lys-305, and Lys-329. 4 residues coordinate Zn(2+): Cys-434, Cys-437, Cys-458, and Cys-464. The disordered stretch occupies residues Glu-528–Asp-548. The BRCT domain maps to Ala-731 to Gly-810.

Belongs to the NAD-dependent DNA ligase family. LigA subfamily. Requires Mg(2+) as cofactor. Mn(2+) is required as a cofactor.

It carries out the reaction NAD(+) + (deoxyribonucleotide)n-3'-hydroxyl + 5'-phospho-(deoxyribonucleotide)m = (deoxyribonucleotide)n+m + AMP + beta-nicotinamide D-nucleotide.. Functionally, DNA ligase that catalyzes the formation of phosphodiester linkages between 5'-phosphoryl and 3'-hydroxyl groups in double-stranded DNA using NAD as a coenzyme and as the energy source for the reaction. It is essential for DNA replication and repair of damaged DNA. The protein is DNA ligase of Methylobacterium radiotolerans (strain ATCC 27329 / DSM 1819 / JCM 2831 / NBRC 15690 / NCIMB 10815 / 0-1).